Reading from the N-terminus, the 23-residue chain is Brevinin-1SE (23 aa).

Cysteines 17 and 23 form a disulfide.

Expressed by the skin glands.

It is found in the secreted. In terms of biological role, mast cell degranulating peptide. Causes histamine release from rat peritoneal mast cells in vitro. Has antibacterial activity against the Gram-negative bacterium E.coli K12 and Gram-positive bacterium M.luteus NCT C2665. The protein is Brevinin-1SE of Lithobates sevosus (Dusky gopher frog).